Reading from the N-terminus, the 134-residue chain is Large ribosomal subunit protein eL27 (134 aa).

Positions 5-40 (LKSGKVVVVLSGRFAGKKAVIVRNFDDGTSSRPYGH) constitute a KOW domain.

This sequence belongs to the eukaryotic ribosomal protein eL27 family.

In Pyrobotrys stellatus (Green alga), this protein is Large ribosomal subunit protein eL27 (RPL27).